Consider the following 669-residue polypeptide: MKIFVGNVDGADTTPEELAALFAPYGTVMSCAVMKQFAFVHMRENAGAVRAIEALHGHELRPGRALVVEMSRPRPLNTWKIFVGNVSAACTSQELRSLFERRGRVIECDVVKDYAFVHMEKEADAKAAIAQLNGKEVKGKRINVELSTKGQKKGPGLAIQSGDKTKKPGAGDTAFPGTGGFSATFDYQQAFGNSTGGFDGQARQPTPPFFGRDRSPLRRSPPRASYVAPLTAQPATYRAQPSVSLGAAYRAQPSASLGVGYRTQPMTAQAASYRAQPSVSLGAPYRGQLASPSSQSAAASSLGPYGGAQPSASALSSYGGQPAAASSLNSYGAQGSSLASYGNQPSSYGAQAASSYGVRAAASSYNTQGAANSLGSYGAQAASYGAQSAASSLAYGAQAASYNAQPSASYNAQSAPYAAQQAASYSSQPAAYVAQPATAAAYASQPAAYAAQATTPMAGSYGAQPVVQTQLNSYGAQASMGLSGSYGAQSAAAATGSYGAAAAYGAQPSATLAAPYRTQSSASLAASYAAQQHPQAAASYRGQPGNAYDGTGQPSAAYLSMSQGVVANANSTPPPYERTRLSPPRASYDDPYKKAVAMSKRYGSDRRLAELSDYRRLSESQLSFRRSPTKSSLDYRRLPDAHSDYARYSGSYNDYLRAAQMHSGYQRRM.

2 consecutive RRM domains span residues 1–73 and 79–149; these read MKIF…MSRP and WKIF…LSTK. Residues Lys-126, Lys-135, Lys-138, Lys-149, and Lys-153 each participate in a glycyl lysine isopeptide (Lys-Gly) (interchain with G-Cter in SUMO2) cross-link. Disordered stretches follow at residues 148–175 and 193–232; these read TKGQKKGPGLAIQSGDKTKKPGAGDTAF and NSTGGFDGQARQPTPPFFGRDRSPLRRSPPRASYVAPLTA. Phosphoserine is present on Ser-161. Lys-164 is modified (N6-acetyllysine; alternate). Residue Lys-164 forms a Glycyl lysine isopeptide (Lys-Gly) (interchain with G-Cter in SUMO2); alternate linkage. Position 206 is a phosphothreonine (Thr-206). Residues Ser-220, Ser-242, Ser-244, Ser-256, Ser-272, and Ser-280 each carry the phosphoserine modification. The disordered stretch occupies residues 284 to 303; it reads PYRGQLASPSSQSAAASSLG. Positions 287 to 303 are enriched in low complexity; sequence GQLASPSSQSAAASSLG. A TRBP-interacting domain; interaction with STIL region spans residues 307-354; the sequence is GAQPSASALSSYGGQPAAASSLNSYGAQGSSLASYGNQPSSYGAQAAS. Ser-520, Ser-523, Ser-527, and Ser-562 each carry phosphoserine. A disordered region spans residues 569-590; sequence ANSTPPPYERTRLSPPRASYDD. Thr-572 is subject to Phosphothreonine. Ser-582 is modified (phosphoserine). A Glycyl lysine isopeptide (Lys-Gly) (interchain with G-Cter in SUMO2) cross-link involves residue Lys-600. Phosphoserine is present on residues Ser-618, Ser-620, Ser-623, Ser-627, Ser-643, and Ser-649.

In terms of assembly, interacts with NCOA6, CITED1 and XRCC5/KU86. Interacts with SS18. Interacts with STIL and interferes with its interaction with CPAP. Interacts with gamma-tubulin. Part of the HDP-RNP complex composed of at least HEXIM1, PRKDC, XRCC5, XRCC6, paraspeckle proteins (SFPQ, NONO, PSPC1, RBM14, and MATR3) and NEAT1 RNA.

It localises to the nucleus. The protein localises to the nucleolus. Its subcellular location is the cytoplasm. Its function is as follows. May function as a nuclear receptor coactivator, enhancing transcription through other coactivators such as NCOA6 and CITED1. Regulates centriole biogenesis by suppressing the formation of aberrant centriolar protein complexes in the cytoplasm and thus preserving mitotic spindle integrity. Prevents the formation of the STIL-CPAP complex (which can induce the formation of aberrant centriolar protein complexes) by interfering with the interaction of STIL with CPAP. Plays a role in the regulation of DNA virus-mediated innate immune response by assembling into the HDP-RNP complex, a complex that serves as a platform for IRF3 phosphorylation and subsequent innate immune response activation through the cGAS-STING pathway. This is RNA-binding protein 14 (RBM14) from Bos taurus (Bovine).